The primary structure comprises 357 residues: MNELNSVVDSAKAAFEQARTPADLENAKALFLGKSGRITELMKGMAALAVDEKKTRGAAINLAKQAIEVALNNRRQALADAELQAQLQAEALDVTLPGRQRGQGSLHPVSLTLERIEAIFGSMGFDVAQGPEIESDWFNFTALNTPEDHPARSMHDTFYVEGGTATAPNLLRTHSSPMQIRYAVQHVKRHRAAVGVGQVEGLFSGDMPEIRVIAPGRTYRVDSDATHSPMFHQCEGLWVGENVSFKDLKFVFTDFCRTFFESDDLVLRFRPSFFPFTEPSAEIDIQFQSGPLAGRWLEVAGSGQVHPNVIRNMGLEPEKYIGFAFGMGPDRLAMLRYGVNDLRLFFDGDVRFLSQFQ.

Residue E278 participates in Mg(2+) binding.

It belongs to the class-II aminoacyl-tRNA synthetase family. Phe-tRNA synthetase alpha subunit type 1 subfamily. In terms of assembly, tetramer of two alpha and two beta subunits. Mg(2+) is required as a cofactor.

The protein localises to the cytoplasm. It carries out the reaction tRNA(Phe) + L-phenylalanine + ATP = L-phenylalanyl-tRNA(Phe) + AMP + diphosphate + H(+). The sequence is that of Phenylalanine--tRNA ligase alpha subunit from Albidiferax ferrireducens (strain ATCC BAA-621 / DSM 15236 / T118) (Rhodoferax ferrireducens).